A 394-amino-acid polypeptide reads, in one-letter code: Elongation factor Tu 2 (394 aa).

The 195-residue stretch at 10 to 204 (KPHVNVGTIG…ALDSYIPEPE (195 aa)) folds into the tr-type G domain. Residues 19 to 26 (GHVDHGKT) form a G1 region. Position 19–26 (19–26 (GHVDHGKT)) interacts with GTP. T26 contacts Mg(2+). The interval 60–64 (GITIN) is G2. Residues 81–84 (DCPG) form a G3 region. GTP is bound by residues 81-85 (DCPGH) and 136-139 (NKCD). The segment at 136–139 (NKCD) is G4. The G5 stretch occupies residues 174 to 176 (SAL).

The protein belongs to the TRAFAC class translation factor GTPase superfamily. Classic translation factor GTPase family. EF-Tu/EF-1A subfamily. In terms of assembly, monomer.

Its subcellular location is the cytoplasm. The enzyme catalyses GTP + H2O = GDP + phosphate + H(+). Its function is as follows. GTP hydrolase that promotes the GTP-dependent binding of aminoacyl-tRNA to the A-site of ribosomes during protein biosynthesis. The sequence is that of Elongation factor Tu 2 from Shewanella sp. (strain MR-4).